A 23-amino-acid polypeptide reads, in one-letter code: Potassium channel toxin kappa-KTx 2.3 (23 aa).

Cystine bridges form between C4–C22 and C8–C18.

Belongs to the short scorpion toxin superfamily. Potassium channel inhibitor kappa-KTx family. Kappa-KTx 2 subfamily. In terms of tissue distribution, expressed by the venom gland.

It localises to the secreted. In terms of biological role, decreases the amplitude of the potassium current of the rat channels Kv1.1/KCNA1 by 33% and Kv1.2/KCNA2 by 8% as well as human Kv1.3/KCNA3 by 70%. The polypeptide is Potassium channel toxin kappa-KTx 2.3 (Opisthacanthus madagascariensis (Scorpion)).